A 338-amino-acid polypeptide reads, in one-letter code: N-acetyl-gamma-glutamyl-phosphate reductase (338 aa).

Cysteine 148 is a catalytic residue.

This sequence belongs to the NAGSA dehydrogenase family. Type 1 subfamily.

The protein localises to the cytoplasm. The enzyme catalyses N-acetyl-L-glutamate 5-semialdehyde + phosphate + NADP(+) = N-acetyl-L-glutamyl 5-phosphate + NADPH + H(+). It functions in the pathway amino-acid biosynthesis; L-arginine biosynthesis; N(2)-acetyl-L-ornithine from L-glutamate: step 3/4. Catalyzes the NADPH-dependent reduction of N-acetyl-5-glutamyl phosphate to yield N-acetyl-L-glutamate 5-semialdehyde. The sequence is that of N-acetyl-gamma-glutamyl-phosphate reductase from Leptospira borgpetersenii serovar Hardjo-bovis (strain JB197).